The sequence spans 929 residues: Lon protease homolog 2, peroxisomal (929 aa).

The region spanning 11–257 (LPLVPLPKGS…RVVEILTRQL (247 aa)) is the Lon N-terminal domain. Residues 302–325 (GLTPPGLSAGRNNDNDDKESNEVD) are disordered. ATP is bound at residue 484–491 (GPPGVGKT). The Lon proteolytic domain occupies 727 to 914 (HGRPGVVTGL…WEAIRQVWPD (188 aa)). Catalysis depends on residues S820 and K863. A Microbody targeting signal motif is present at residues 927-929 (SRL).

Belongs to the peptidase S16 family.

The protein resides in the peroxisome matrix. The enzyme catalyses Hydrolysis of proteins in presence of ATP.. Functionally, ATP-dependent serine protease that mediates the selective degradation of misfolded and unassembled polypeptides in the peroxisomal matrix. Necessary for type 2 peroxisome targeting signal (PTS2)-containing protein processing and facilitates peroxisome matrix protein import. The sequence is that of Lon protease homolog 2, peroxisomal from Aspergillus niger (strain ATCC MYA-4892 / CBS 513.88 / FGSC A1513).